A 459-amino-acid chain; its full sequence is MNTGKITQIIGAVIDVEFSVDSMPKIYDALKVSETGLTLEVQQQLGDYVVRTIAMGGSEGLKRGLKVTNTGGPIKVPVGVKTLGRIMNVLGEPIDNAGDIGQEVSWAIHRSAPAYHELAPAAELLETGIKVIDLICPFAKGGKVGLFGGAGVGKTVNMMELIRNIAIEHSGYSVFSGVGERTREGNDFYHEMKESNVLDKVSLVYGQMNEPPGNRLRVALTGLTMAEYFRDEGHDVLLFIDNIYRYTLAGTEVSALLGRMPSAVGYQPTLASEMGALQERITSTKKGSITSIQAVYVPADDLTDPSPATTFAHLDATVVLSRQVAELGIYPAVDPLDSTSRQLDPLIVGEEHYNVARGVQSVLQRYKELKDIIAILGMDELSEEDKHSVSRARKIQRFLSQPFFVAEVFTGAPGKYVSLKDTIVGFKAILDGEMDDFPEQAFYMIGSIEEVRETNKEGL.

ATP is bound at residue 148-155 (GGAGVGKT).

Belongs to the ATPase alpha/beta chains family. F-type ATPases have 2 components, CF(1) - the catalytic core - and CF(0) - the membrane proton channel. CF(1) has five subunits: alpha(3), beta(3), gamma(1), delta(1), epsilon(1). CF(0) has three main subunits: a(1), b(2) and c(9-12). The alpha and beta chains form an alternating ring which encloses part of the gamma chain. CF(1) is attached to CF(0) by a central stalk formed by the gamma and epsilon chains, while a peripheral stalk is formed by the delta and b chains.

The protein resides in the cell inner membrane. It catalyses the reaction ATP + H2O + 4 H(+)(in) = ADP + phosphate + 5 H(+)(out). Its function is as follows. Produces ATP from ADP in the presence of a proton gradient across the membrane. The catalytic sites are hosted primarily by the beta subunits. This chain is ATP synthase subunit beta, found in Ruthia magnifica subsp. Calyptogena magnifica.